Consider the following 207-residue polypeptide: Probable mediator of RNA polymerase II transcription subunit 19b (207 aa).

Residues 99–207 form a disordered region; that stretch reads DTAPVELPPA…SSKLDEMGAM (109 aa). Residues 127-152 are compositionally biased toward basic residues; that stretch reads DRKHRKHKDKKEKDREHKKHKHKHKD. Over residues 153–167 the composition is skewed to basic and acidic residues; the sequence is RIKDKDKDKDRDKKK. Residues 168-179 are compositionally biased toward basic residues; sequence EKSGHHDKKRKN.

It belongs to the plant Mediator complex subunit 19 family. In terms of assembly, component of the Mediator complex.

The protein localises to the nucleus. In terms of biological role, component of the Mediator complex, a coactivator involved in the regulated transcription of nearly all RNA polymerase II-dependent genes. Mediator functions as a bridge to convey information from gene-specific regulatory proteins to the basal RNA polymerase II transcription machinery. The Mediator complex, having a compact conformation in its free form, is recruited to promoters by direct interactions with regulatory proteins and serves for the assembly of a functional preinitiation complex with RNA polymerase II and the general transcription factors. This is Probable mediator of RNA polymerase II transcription subunit 19b (MED19B) from Arabidopsis thaliana (Mouse-ear cress).